Reading from the N-terminus, the 284-residue chain is Insulin-like growth factor-binding protein 2 (284 aa).

An N-terminal signal peptide occupies residues 1-21 (MGLSRYLLGLLLGVLCTPAPA). The IGFBP N-terminal domain maps to 23–106 (VLFRCPPCSP…VLGLGTCGKR (84 aa)). Intrachain disulfides connect Cys-27-Cys-56, Cys-30-Cys-58, Cys-38-Cys-59, Cys-47-Cys-62, Cys-70-Cys-83, and Cys-77-Cys-103. The tract at residues 108-184 (DTEYGSSQER…KSEDKKRPAR (77 aa)) is disordered. Residues 117-127 (RGTELPEERSD) show a composition bias toward basic and acidic residues. Residues 136-145 (EAGPAVAGEA) are compositionally biased toward low complexity. Basic and acidic residues predominate over residues 152–180 (KKEMKEIAVTRERANEQQRSKSNKSEDKK). Residues 184-266 (RSLCQLQLDQ…SPTIRGDPEC (83 aa)) form the Thyroglobulin type-1 domain. Cystine bridges form between Cys-187/Cys-221, Cys-232/Cys-243, and Cys-245/Cys-266. Positions 261-263 (RGD) match the Cell attachment site motif.

In terms of assembly, interacts with igf1 and igf2.

Its subcellular location is the secreted. Functionally, IGF-binding proteins prolong the half-life of the IGFs and have been shown to either inhibit or stimulate the growth promoting effects of the IGFs on cell culture. They alter the interaction of IGFs with their cell surface receptors. The protein is Insulin-like growth factor-binding protein 2 of Xenopus tropicalis (Western clawed frog).